The chain runs to 184 residues: NADH-quinone oxidoreductase subunit B (184 aa).

Residues Cys-63, Cys-64, Cys-128, and Cys-158 each contribute to the [4Fe-4S] cluster site.

It belongs to the complex I 20 kDa subunit family. As to quaternary structure, NDH-1 is composed of 14 different subunits. Subunits NuoB, C, D, E, F, and G constitute the peripheral sector of the complex. It depends on [4Fe-4S] cluster as a cofactor.

It is found in the cell inner membrane. It carries out the reaction a quinone + NADH + 5 H(+)(in) = a quinol + NAD(+) + 4 H(+)(out). Its function is as follows. NDH-1 shuttles electrons from NADH, via FMN and iron-sulfur (Fe-S) centers, to quinones in the respiratory chain. Couples the redox reaction to proton translocation (for every two electrons transferred, four hydrogen ions are translocated across the cytoplasmic membrane), and thus conserves the redox energy in a proton gradient. This Stenotrophomonas maltophilia (strain R551-3) protein is NADH-quinone oxidoreductase subunit B.